We begin with the raw amino-acid sequence, 240 residues long: Pyridoxine 5'-phosphate synthase (240 aa).

Position 7 (Asn7) interacts with 3-amino-2-oxopropyl phosphate. 9 to 10 (DH) contributes to the 1-deoxy-D-xylulose 5-phosphate binding site. Arg18 provides a ligand contact to 3-amino-2-oxopropyl phosphate. His43 (proton acceptor) is an active-site residue. The 1-deoxy-D-xylulose 5-phosphate site is built by Arg45 and His50. The Proton acceptor role is filled by Glu70. Thr100 contacts 1-deoxy-D-xylulose 5-phosphate. The active-site Proton donor is the His191. Residues Gly192 and 213-214 (GH) contribute to the 3-amino-2-oxopropyl phosphate site.

The protein belongs to the PNP synthase family. As to quaternary structure, homooctamer; tetramer of dimers.

The protein localises to the cytoplasm. The enzyme catalyses 3-amino-2-oxopropyl phosphate + 1-deoxy-D-xylulose 5-phosphate = pyridoxine 5'-phosphate + phosphate + 2 H2O + H(+). It participates in cofactor biosynthesis; pyridoxine 5'-phosphate biosynthesis; pyridoxine 5'-phosphate from D-erythrose 4-phosphate: step 5/5. Catalyzes the complicated ring closure reaction between the two acyclic compounds 1-deoxy-D-xylulose-5-phosphate (DXP) and 3-amino-2-oxopropyl phosphate (1-amino-acetone-3-phosphate or AAP) to form pyridoxine 5'-phosphate (PNP) and inorganic phosphate. This Acaryochloris marina (strain MBIC 11017) protein is Pyridoxine 5'-phosphate synthase.